The chain runs to 395 residues: Argininosuccinate synthase (395 aa).

ATP-binding positions include 6 to 14 and Ala-33; that span reads AYSGGLDTS. Tyr-84 contributes to the L-citrulline binding site. Gly-114 serves as a coordination point for ATP. Residues Thr-116, Asn-120, and Asp-121 each contribute to the L-aspartate site. Asn-120 is a binding site for L-citrulline. Positions 124, 173, 182, 258, and 270 each coordinate L-citrulline.

This sequence belongs to the argininosuccinate synthase family. Type 1 subfamily. Homotetramer.

The protein localises to the cytoplasm. The catalysed reaction is L-citrulline + L-aspartate + ATP = 2-(N(omega)-L-arginino)succinate + AMP + diphosphate + H(+). The protein operates within amino-acid biosynthesis; L-arginine biosynthesis; L-arginine from L-ornithine and carbamoyl phosphate: step 2/3. The protein is Argininosuccinate synthase of Rhodococcoides fascians (Rhodococcus fascians).